The sequence spans 122 residues: Selenoprotein H (122 aa).

Lys20 carries the post-translational modification N6-acetyllysine. A cross-link (cysteinyl-selenocysteine (Cys-Sec); redox-active) is located at residues 41-44 (CTSU). Position 44 (Sec44) is a non-standard amino acid, selenocysteine.

The protein belongs to the SelWTH family.

May be involved in a redox-related process. This chain is Selenoprotein H, found in Homo sapiens (Human).